The sequence spans 130 residues: MSKPRIALIAHDAKKDEIVALAGEFRATLAQCRLVATGTTGGRIADAHGLEVERKLSGPLGGDLQIGAELADGRIDIVVFLRDPMTAQPHDPDITALVRACDVHDVPVATNVATARMLLDDLARNMQDVC.

Positions 1 to 130 constitute an MGS-like domain; sequence MSKPRIALIA…DLARNMQDVC (130 aa). Substrate-binding positions include His-11, Lys-15, 37 to 40, and 57 to 58; these read TGTT and SG. Residue Asp-63 is the Proton donor/acceptor of the active site. Residue His-90 participates in substrate binding.

The protein belongs to the methylglyoxal synthase family.

It carries out the reaction dihydroxyacetone phosphate = methylglyoxal + phosphate. Its function is as follows. Catalyzes the formation of methylglyoxal from dihydroxyacetone phosphate. This chain is Methylglyoxal synthase, found in Burkholderia lata (strain ATCC 17760 / DSM 23089 / LMG 22485 / NCIMB 9086 / R18194 / 383).